Here is a 424-residue protein sequence, read N- to C-terminus: Tubulin gamma chain, nucleomorph (424 aa).

A GTP-binding site is contributed by 137-143; it reads NGGTGAG.

It belongs to the tubulin family.

Tubulin is the major constituent of microtubules. The gamma chain is found at microtubule organizing centers (MTOC) such as the spindle poles or the centrosome, suggesting that it is involved in the minus-end nucleation of microtubule assembly. This chain is Tubulin gamma chain, nucleomorph (tubG), found in Guillardia theta (Cryptophyte).